Here is a 177-residue protein sequence, read N- to C-terminus: Peptidoglycan-associated lipoprotein (177 aa).

The signal sequence occupies residues 1-32; it reads MSRTNISALSPMQKLARNPAVIAMTLALALAG. Cysteine 33 is lipidated: N-palmitoyl cysteine. Cysteine 33 is lipidated: S-diacylglycerol cysteine. Positions 59-176 constitute an OmpA-like domain; it reads QQDFTVNVGD…RAVTVLGGAG (118 aa).

Belongs to the Pal lipoprotein family. In terms of assembly, the Tol-Pal system is composed of five core proteins: the inner membrane proteins TolA, TolQ and TolR, the periplasmic protein TolB and the outer membrane protein Pal. They form a network linking the inner and outer membranes and the peptidoglycan layer.

The protein resides in the cell outer membrane. Part of the Tol-Pal system, which plays a role in outer membrane invagination during cell division and is important for maintaining outer membrane integrity. The chain is Peptidoglycan-associated lipoprotein from Agrobacterium fabrum (strain C58 / ATCC 33970) (Agrobacterium tumefaciens (strain C58)).